A 162-amino-acid chain; its full sequence is Methyl-coenzyme M reductase II operon protein D (162 aa).

MCR is composed of three subunits: alpha, beta, and gamma. The function of protein D is not known.

This chain is Methyl-coenzyme M reductase II operon protein D (mrtD), found in Methanothermobacter thermautotrophicus (strain ATCC 29096 / DSM 1053 / JCM 10044 / NBRC 100330 / Delta H) (Methanobacterium thermoautotrophicum).